A 198-amino-acid chain; its full sequence is Elongation factor Ts (198 aa).

The segment at 81–84 is involved in Mg(2+) ion dislocation from EF-Tu; it reads TDFV.

The protein belongs to the EF-Ts family.

The protein localises to the cytoplasm. Functionally, associates with the EF-Tu.GDP complex and induces the exchange of GDP to GTP. It remains bound to the aminoacyl-tRNA.EF-Tu.GTP complex up to the GTP hydrolysis stage on the ribosome. In Dictyoglomus turgidum (strain DSM 6724 / Z-1310), this protein is Elongation factor Ts.